The primary structure comprises 374 residues: Tuliposide A-converting enzyme b3, amyloplastic (374 aa).

An amyloplast-targeting transit peptide spans 1-68 (MSAALFCGPP…TNSSLSPSPT (68 aa)). S226 acts as the Acyl-ester intermediate in catalysis. Active-site charge relay system residues include D316 and H348.

Belongs to the AB hydrolase superfamily. As to quaternary structure, homodimer. As to expression, highly expressed in pistil and bulb scales. Lower expression in stem, and barely detected in root, leaf, petal and stamen.

It is found in the plastid. The protein localises to the amyloplast. The enzyme catalyses 6-tuliposide A = tulipalin A + D-glucose. Lactone-forming carboxylesterases, specifically catalyzing intramolecular transesterification, but not hydrolysis. Involved in the biosynthesis of tulipalins, defensive chemicals that show antimicrobial activities against a broad range of strains of bacteria and fungi. Substrates are 6-tuliposide A &gt; 6-tuliposide B. The chain is Tuliposide A-converting enzyme b3, amyloplastic (TCEA-B3) from Tulipa gesneriana (Garden tulip).